A 379-amino-acid polypeptide reads, in one-letter code: Probable peptidoglycan glycosyltransferase FtsW (379 aa).

Residues Met-1–Thr-15 are Cytoplasmic-facing. Residues Leu-16–Met-36 traverse the membrane as a helical segment. At Pro-37–Arg-52 the chain is on the periplasmic side. The helical transmembrane segment at Tyr-53–Ala-73 threads the bilayer. Over Ser-74–Ser-79 the chain is Cytoplasmic. The chain crosses the membrane as a helical span at residues Ser-80–Val-100. At Asn-101–Arg-113 the chain is on the periplasmic side. Residues Ile-114 to Val-133 form a helical membrane-spanning segment. The Cytoplasmic segment spans residues Arg-134–Val-139. Residues Arg-140–Ala-162 form a helical membrane-spanning segment. Over Gln-163 to Asp-165 the chain is Periplasmic. Residues Leu-166 to Ala-183 form a helical membrane-spanning segment. Topologically, residues Glu-184–Lys-186 are cytoplasmic. A helical membrane pass occupies residues Ile-187–Ala-207. Over Lys-208–Ser-269 the chain is Periplasmic. A helical transmembrane segment spans residues Ile-270 to Val-290. Residues Ala-291–Ala-301 are Cytoplasmic-facing. The chain crosses the membrane as a helical span at residues Leu-302–Phe-322. The Periplasmic portion of the chain corresponds to Gln-323–Leu-342. Residues Pro-343–Ile-363 form a helical membrane-spanning segment. Residues Arg-364 to Arg-379 lie on the Cytoplasmic side of the membrane.

The protein belongs to the SEDS family. FtsW subfamily.

Its subcellular location is the cell inner membrane. The enzyme catalyses [GlcNAc-(1-&gt;4)-Mur2Ac(oyl-L-Ala-gamma-D-Glu-L-Lys-D-Ala-D-Ala)](n)-di-trans,octa-cis-undecaprenyl diphosphate + beta-D-GlcNAc-(1-&gt;4)-Mur2Ac(oyl-L-Ala-gamma-D-Glu-L-Lys-D-Ala-D-Ala)-di-trans,octa-cis-undecaprenyl diphosphate = [GlcNAc-(1-&gt;4)-Mur2Ac(oyl-L-Ala-gamma-D-Glu-L-Lys-D-Ala-D-Ala)](n+1)-di-trans,octa-cis-undecaprenyl diphosphate + di-trans,octa-cis-undecaprenyl diphosphate + H(+). Its pathway is cell wall biogenesis; peptidoglycan biosynthesis. In terms of biological role, peptidoglycan polymerase that is essential for cell division. In Moranella endobia (strain PCIT), this protein is Probable peptidoglycan glycosyltransferase FtsW.